The primary structure comprises 314 residues: Protoheme IX farnesyltransferase (314 aa).

Transmembrane regions (helical) follow at residues 58–78 (LWLVVATVVGGAFSAGSASVF), 107–127 (AALVFGFVLGILSTVILYVWV), 130–150 (LSAALSVAANAFYVLVYTMLL), 173–193 (WTAVTGSLSWVPVVLFAVVFF), 227–247 (VGRQVVIYSWVMVATSLLLWP), 248–268 (VAGTGIFYPIAAGVLGAVFLL), and 294–314 (SSNLYLSLLFVAVALDPLLAG).

The protein belongs to the UbiA prenyltransferase family. Protoheme IX farnesyltransferase subfamily.

It localises to the cell membrane. The catalysed reaction is heme b + (2E,6E)-farnesyl diphosphate + H2O = Fe(II)-heme o + diphosphate. Its pathway is porphyrin-containing compound metabolism; heme O biosynthesis; heme O from protoheme: step 1/1. Converts heme B (protoheme IX) to heme O by substitution of the vinyl group on carbon 2 of heme B porphyrin ring with a hydroxyethyl farnesyl side group. The sequence is that of Protoheme IX farnesyltransferase from Nocardioides sp. (strain ATCC BAA-499 / JS614).